Reading from the N-terminus, the 156-residue chain is Small ribosomal subunit protein uS7c (156 aa).

This sequence belongs to the universal ribosomal protein uS7 family. In terms of assembly, part of the 30S ribosomal subunit.

It is found in the plastid. The protein localises to the chloroplast. Functionally, one of the primary rRNA binding proteins, it binds directly to 16S rRNA where it nucleates assembly of the head domain of the 30S subunit. This chain is Small ribosomal subunit protein uS7c (rps7), found in Cyanidium caldarium (Red alga).